Here is a 315-residue protein sequence, read N- to C-terminus: tRNA uridine(34) hydroxylase (315 aa).

The 102-residue stretch at 122–223 (SDPDVLVIDT…YLEQIPQPES (102 aa)) folds into the Rhodanese domain. Cys183 serves as the catalytic Cysteine persulfide intermediate.

This sequence belongs to the TrhO family.

The catalysed reaction is uridine(34) in tRNA + AH2 + O2 = 5-hydroxyuridine(34) in tRNA + A + H2O. Functionally, catalyzes oxygen-dependent 5-hydroxyuridine (ho5U) modification at position 34 in tRNAs. This chain is tRNA uridine(34) hydroxylase, found in Caulobacter vibrioides (strain ATCC 19089 / CIP 103742 / CB 15) (Caulobacter crescentus).